The following is a 286-amino-acid chain: MTELRPFYEESQSIYDVSDEFFSLFLDPTMAYTCAYFEREDMTLEEAQNAKFDLALDKLHLEPGMTLLDIGCGWGGGLQRAIENYDVNVIGITLSRNQFEYSKAKLAKIPTERSVQVRLQGWDEFTDKVDRIVSIGAFEAFKMERYAAFFERSYDILPDDGRMLLHTILTYTQKQMHEMGVKVTMSDVRFMKFIGEEIFPGGQLPAQEDIFKFAQAADFSVEKVQLLQQHYARTLNIWAANLEANKDRAIALQSEEIYNKYMHYLTGCEHFFRKGISNVGQFTLTK.

S-adenosyl-L-methionine-binding positions include 32–33 (YT), 67–75 (LLDIGCGWG), 93–98 (TLSRNQ), and 122–123 (WD). Cys-268 is a catalytic residue.

It belongs to the CFA/CMAS family.

It localises to the cytoplasm. Methyltransferase that modifies short-chain fatty acids. In vitro, catalyzes the transfer of the methyl group from S-adenosyl-L-methionine (SAM) to the double bond of phospholipid-linked oleic acid to produce tuberculostearic acid (10-methylstearic-acid or TSA). This Mycobacterium tuberculosis (strain ATCC 25618 / H37Rv) protein is S-adenosylmethionine-dependent methyltransferase UmaA.